The chain runs to 65 residues: Trypsin inhibitor (65 aa).

Homotrimer.

This chain is Trypsin inhibitor, found in Zea mays (Maize).